Consider the following 424-residue polypeptide: F-box protein At2g38590 (424 aa).

Positions 2–47 (TTMISNLPRVLIEEIFFRVPLKSLRAVRLTCKSWNTLSKSRSFRKL) constitute an F-box domain.

The polypeptide is F-box protein At2g38590 (Arabidopsis thaliana (Mouse-ear cress)).